A 1272-amino-acid chain; its full sequence is RING finger protein PFE0100w (1272 aa).

The disordered stretch occupies residues 216–260 (INKINDVSNNDPKKDNNEKNTSSNNITHNNYNDISNNNNNNNNIN). The span at 234–260 (KNTSSNNITHNNYNDISNNNNNNNNIN) shows a compositional bias: low complexity. A CHCR repeat occupies 608 to 752 (YIQTINYLET…GYKFIKYYPQ (145 aa)). A helical membrane pass occupies residues 771–791 (IFIPLFLDNIDFLFMFIVKFL). Disordered regions lie at residues 842-862 (NQNH…NNSQ) and 908-970 (ENQT…IINK). 2 stretches are compositionally biased toward low complexity: residues 850 to 861 (SDSHNLSDDNNS) and 909 to 956 (NQTN…IQTN). Residues 957 to 967 (KQKGNSTTNKI) are compositionally biased toward polar residues. Positions 1146–1182 (MNDMNKNINDKCIEIEKDKKELEKIKKKQLKKKYNFY) form a coiled coil. Residues 1189–1224 (CSICKEILSVPMIHFLCKHSYHSYCLKDNNVCILCH) form an RING-type; atypical zinc finger.

The protein localises to the membrane. This is RING finger protein PFE0100w from Plasmodium falciparum (isolate 3D7).